Reading from the N-terminus, the 424-residue chain is Multifunctional CCA protein (424 aa).

ATP is bound by residues Gly-8 and Arg-11. CTP contacts are provided by Gly-8 and Arg-11. Positions 21 and 23 each coordinate Mg(2+). 3 residues coordinate ATP: Arg-91, Arg-149, and Arg-152. Positions 91, 149, and 152 each coordinate CTP. Residues 238–339 form the HD domain; that stretch reads TGIHLMMVLD…VRLLERCDAF (102 aa).

This sequence belongs to the tRNA nucleotidyltransferase/poly(A) polymerase family. Bacterial CCA-adding enzyme type 1 subfamily. Monomer. Can also form homodimers and oligomers. The cofactor is Mg(2+). Ni(2+) serves as cofactor.

The enzyme catalyses a tRNA precursor + 2 CTP + ATP = a tRNA with a 3' CCA end + 3 diphosphate. The catalysed reaction is a tRNA with a 3' CCA end + 2 CTP + ATP = a tRNA with a 3' CCACCA end + 3 diphosphate. Its function is as follows. Catalyzes the addition and repair of the essential 3'-terminal CCA sequence in tRNAs without using a nucleic acid template. Adds these three nucleotides in the order of C, C, and A to the tRNA nucleotide-73, using CTP and ATP as substrates and producing inorganic pyrophosphate. tRNA 3'-terminal CCA addition is required both for tRNA processing and repair. Also involved in tRNA surveillance by mediating tandem CCA addition to generate a CCACCA at the 3' terminus of unstable tRNAs. While stable tRNAs receive only 3'-terminal CCA, unstable tRNAs are marked with CCACCA and rapidly degraded. This chain is Multifunctional CCA protein, found in Polaromonas naphthalenivorans (strain CJ2).